The primary structure comprises 158 residues: Methylated-DNA--protein-cysteine methyltransferase (158 aa).

Cys126 (nucleophile; methyl group acceptor) is an active-site residue.

It belongs to the MGMT family.

The protein localises to the cytoplasm. It carries out the reaction a 6-O-methyl-2'-deoxyguanosine in DNA + L-cysteinyl-[protein] = S-methyl-L-cysteinyl-[protein] + a 2'-deoxyguanosine in DNA. The catalysed reaction is a 4-O-methyl-thymidine in DNA + L-cysteinyl-[protein] = a thymidine in DNA + S-methyl-L-cysteinyl-[protein]. Functionally, involved in the cellular defense against the biological effects of O6-methylguanine (O6-MeG) and O4-methylthymine (O4-MeT) in DNA. Repairs the methylated nucleobase in DNA by stoichiometrically transferring the methyl group to a cysteine residue in the enzyme. This is a suicide reaction: the enzyme is irreversibly inactivated. This chain is Methylated-DNA--protein-cysteine methyltransferase, found in Methanosarcina barkeri (strain Fusaro / DSM 804).